The sequence spans 557 residues: Nucleoprotein (557 aa).

The interval 54 to 235 (MRKDKRSDDD…ITKEESANNI (182 aa)) is binding site for the cap structure m7GTP. Aspartate 379 and glutamate 381 together coordinate Mn(2+). Residues glutamate 389, cysteine 496, histidine 499, and cysteine 518 each coordinate Zn(2+). Residue aspartate 522 coordinates Mn(2+).

The protein belongs to the arenaviridae nucleocapsid protein family. As to quaternary structure, homomultimerizes to form the nucleocapsid. Binds to viral genomic RNA. Interacts with glycoprotein G2. Interacts with protein Z; this interaction probably directs the encapsidated genome to budding sites. Interacts with protein L; this interaction does not interfere with Z-L interaction. Interacts with host IKBKE (via Protein kinase domain); the interaction inhibits IKBKE kinase activity.

It is found in the virion. It localises to the host cytoplasm. Encapsidates the genome, protecting it from nucleases. The encapsidated genomic RNA is termed the nucleocapsid (NC). Serves as template for viral transcription and replication. The increased presence of protein N in host cell does not seem to trigger the switch from transcription to replication as observed in other negative strain RNA viruses. Through the interaction with host IKBKE, strongly inhibits the phosphorylation and nuclear translocation of host IRF3, a protein involved in interferon activation pathway, leading to the inhibition of interferon-beta and IRF3-dependent promoters activation. Also encodes a functional 3'-5' exoribonuclease that degrades preferentially dsRNA substrates and thereby participates in the suppression of interferon induction. This chain is Nucleoprotein, found in Calomys callosus (Large vesper mouse).